The following is a 597-amino-acid chain: Nuclear receptor subfamily 4 group A member 1 (597 aa).

A disordered region spans residues 1–22; that stretch reads MPCIQAQYGTPATSPGPRDHLT. Residues 170 to 465 form a required for nuclear import region; the sequence is RVWTEQLPKA…PGEGKLIFCS (296 aa). Residues 263-338 constitute a DNA-binding region (nuclear receptor); it reads EGRCAVCGDN…VGMVKEVVRT (76 aa). 2 consecutive NR C4-type zinc fingers follow at residues 266–286 and 302–326; these read CAVCGDNASCQHYGVRTCEGC and CLANKDCPVDKRRRNRCQFCRFQKC. Positions 267–353 are required for binding NBRE-containing DNA; that stretch reads AVCGDNASCQ…RRGRLPSKPK (87 aa). The segment at 298 to 360 is required for the interaction with RXRA; sequence AKYICLANKD…KPKQPPDASP (63 aa). Serine 340 is modified (phosphoserine; by PKA). Positions 341-360 are disordered; it reads LKGRRGRLPSKPKQPPDASP. At serine 350 the chain carries Phosphoserine; by PKA, RPS6KA1 and RPS6KA3. The NR LBD domain occupies 359–594; the sequence is SPTNLLTSLI…PIVDKIFMDT (236 aa). A binds lipopolysaccharide region spans residues 520 to 543; it reads PRRVEELQNRIASCLKEHMAAVAG. Residues 583-594 are AF-2; the sequence is PPPIVDKIFMDT.

This sequence belongs to the nuclear hormone receptor family. NR4 subfamily. In terms of assembly, binds the NGFI-B response element (NBRE) as a monomer. Binds the Nur response element (NurRE), consisting of two inverse NBRE-related octanucleotide repeats separated by 6 base-pairs, as a dimer. Interacts (via N-terminus) with NLRP3 (via LRR repeat domain); the interaction is direct, requires binding of NR4A1/Nur77 to NBRE-containing dsDNA and lipopolysaccharide, and leads to non-canonical NLRP3 inflammasome activation. Interacts with GADD45GIP1. Interacts with STK11. Interacts with IFI27. Heterodimer (via DNA-binding domain) with RXRA (via C-terminus); DNA-binding of the heterodimer is enhanced by 9-cis retinoic acid. Competes for the RXRA interaction with EP300 and thereby attenuates EP300 mediated acetylation of RXRA. Interacts with NCOA1. Interacts with NCOA2. Interacts with NCOA3. Zn(2+) is required as a cofactor. Phosphorylated at Ser-350 by RPS6KA1 and RPS6KA3 in response to mitogenic or stress stimuli. Phosphorylation of Ser-350 results in decrease in NBRE binding while phosphorylation of Ser-340 has little effect on it. In terms of processing, acetylated by p300/CBP, acetylation increases stability. Deacetylated by HDAC1. Expressed in lung, brain and superior cervical ganglia. High levels are seen in the adrenal tissue.

It is found in the nucleus. The protein resides in the cytoplasm. It localises to the cytosol. The protein localises to the mitochondrion. Orphan nuclear receptor. Binds the NGFI-B response element (NBRE) 5'-AAAGGTCA-3'. Binds 9-cis-retinoic acid outside of its ligand-binding (NR LBD) domain. Participates in energy homeostasis by sequestrating the kinase STK11 in the nucleus, thereby attenuating cytoplasmic AMPK activation. Regulates the inflammatory response in macrophages by regulating metabolic adaptations during inflammation, including repressing the transcription of genes involved in the citric acid cycle (TCA). Inhibits NF-kappa-B signaling by binding to low-affinity NF-kappa-B binding sites, such as at the IL2 promoter. May act concomitantly with NR4A2 in regulating the expression of delayed-early genes during liver regeneration. Plays a role in the vascular response to injury. Its function is as follows. In the cytosol, upon its detection of both bacterial lipopolysaccharide (LPS) and NBRE-containing mitochondrial DNA released by GSDMD pores during pyroptosis, it promotes non-canonical NLRP3 inflammasome activation by stimulating association of NLRP3 and NEK7. This is Nuclear receptor subfamily 4 group A member 1 (Nr4a1) from Rattus norvegicus (Rat).